The following is a 65-amino-acid chain: Hainantoxin-X.2 (65 aa).

Positions 1–20 are cleaved as a signal peptide; sequence MNVKILVLVAVLCLVVSTHA. Residues 21–37 constitute a propeptide that is removed on maturation; sequence ERHSKTDMEDSPMIQER. Disulfide bonds link cysteine 39-cysteine 56, cysteine 46-cysteine 59, and cysteine 55-cysteine 64.

It belongs to the neurotoxin 36 family. 02 subfamily. As to expression, expressed by the venom gland.

It localises to the secreted. Functionally, reversibly blocks N-type calcium channels (Cav2.2/CACNA1B) in rat dorsal root ganglion cells. Elicits no toxic symptoms in either vertebrates or invertebrates during a period of 48 hours post-injection, when it was assayed in vivo by direct injection into mice and cockroaches. The sequence is that of Hainantoxin-X.2 from Cyriopagopus hainanus (Chinese bird spider).